Here is a 268-residue protein sequence, read N- to C-terminus: Tryptophan synthase alpha chain (268 aa).

Residues Glu-49 and Asp-60 each act as proton acceptor in the active site.

The protein belongs to the TrpA family. In terms of assembly, tetramer of two alpha and two beta chains.

The enzyme catalyses (1S,2R)-1-C-(indol-3-yl)glycerol 3-phosphate + L-serine = D-glyceraldehyde 3-phosphate + L-tryptophan + H2O. The protein operates within amino-acid biosynthesis; L-tryptophan biosynthesis; L-tryptophan from chorismate: step 5/5. The alpha subunit is responsible for the aldol cleavage of indoleglycerol phosphate to indole and glyceraldehyde 3-phosphate. The protein is Tryptophan synthase alpha chain of Sodalis glossinidius (strain morsitans).